A 173-amino-acid chain; its full sequence is MRFSVVTSYLLCAAASYANAASLFGLSFPEPPSANKPIPGDSPLLQCDVDQSQSLDVTQVNLVPNPPQRGENLTIAAAGVLQTTIEEGAYIDIEVRLGYIKLISQTYDLCEQLEENDIDGLKCPIEEGVYELNKIVEIPSEVPPGKYSVIARAYNVDDEQITCLTGEVIFPAY.

Positions 1 to 20 (MRFSVVTSYLLCAAASYANA) are cleaved as a signal peptide. Positions 21 to 34 (ASLFGLSFPEPPSA) are excised as a propeptide.

The protein belongs to the NPC2 family. Monomer.

Catalyzes the intermembrane transfer of phosphatidylglycerol and phosphatidylinositol. In Kluyveromyces lactis (strain ATCC 8585 / CBS 2359 / DSM 70799 / NBRC 1267 / NRRL Y-1140 / WM37) (Yeast), this protein is Phosphatidylglycerol/phosphatidylinositol transfer protein (NPC2).